A 524-amino-acid polypeptide reads, in one-letter code: Probable glycine dehydrogenase (decarboxylating) subunit 2 (524 aa).

Lys296 bears the N6-(pyridoxal phosphate)lysine mark.

It belongs to the GcvP family. C-terminal subunit subfamily. In terms of assembly, the glycine cleavage system is composed of four proteins: P, T, L and H. In this organism, the P 'protein' is a heterodimer of two subunits. Requires pyridoxal 5'-phosphate as cofactor.

It catalyses the reaction N(6)-[(R)-lipoyl]-L-lysyl-[glycine-cleavage complex H protein] + glycine + H(+) = N(6)-[(R)-S(8)-aminomethyldihydrolipoyl]-L-lysyl-[glycine-cleavage complex H protein] + CO2. In terms of biological role, the glycine cleavage system catalyzes the degradation of glycine. The P protein binds the alpha-amino group of glycine through its pyridoxal phosphate cofactor; CO(2) is released and the remaining methylamine moiety is then transferred to the lipoamide cofactor of the H protein. This is Probable glycine dehydrogenase (decarboxylating) subunit 2 from Caulobacter vibrioides (strain ATCC 19089 / CIP 103742 / CB 15) (Caulobacter crescentus).